The chain runs to 238 residues: Orotidine 5'-phosphate decarboxylase (238 aa).

Substrate is bound by residues Asp-10, Lys-32, 59-68, Thr-122, Arg-184, Gln-193, Gly-213, and Arg-214; that span reads DLKLHDIPNT. Lys-61 serves as the catalytic Proton donor.

Belongs to the OMP decarboxylase family. Type 1 subfamily. In terms of assembly, homodimer.

It carries out the reaction orotidine 5'-phosphate + H(+) = UMP + CO2. The protein operates within pyrimidine metabolism; UMP biosynthesis via de novo pathway; UMP from orotate: step 2/2. Its function is as follows. Catalyzes the decarboxylation of orotidine 5'-monophosphate (OMP) to uridine 5'-monophosphate (UMP). The polypeptide is Orotidine 5'-phosphate decarboxylase (Bacillus cereus (strain B4264)).